We begin with the raw amino-acid sequence, 152 residues long: Aspartate carbamoyltransferase regulatory chain (152 aa).

Cys107, Cys112, Cys136, and Cys139 together coordinate Zn(2+).

This sequence belongs to the PyrI family. Contains catalytic and regulatory chains. Zn(2+) serves as cofactor.

In terms of biological role, involved in allosteric regulation of aspartate carbamoyltransferase. This chain is Aspartate carbamoyltransferase regulatory chain, found in Chromobacterium violaceum (strain ATCC 12472 / DSM 30191 / JCM 1249 / CCUG 213 / NBRC 12614 / NCIMB 9131 / NCTC 9757 / MK).